Reading from the N-terminus, the 465-residue chain is Gamma-aminobutyric acid receptor subunit gamma-1 (465 aa).

Positions 1–35 (MGPLKAFLFSPFLLRSQSRGVRLVFLLLTLHLGNC) are cleaved as a signal peptide. Over 36 to 273 (VDKADDEDDE…FDLSRRMGYF (238 aa)) the chain is Extracellular. N-linked (GlcNAc...) asparagine glycans are attached at residues asparagine 50 and asparagine 127. Cysteine 188 and cysteine 202 are disulfide-bonded. N-linked (GlcNAc...) asparagine glycosylation is present at asparagine 245. The chain crosses the membrane as a helical span at residues 274–294 (TIQTYIPCILTVVLSWVSFWI). Residues 295–300 (NKDAVP) are Cytoplasmic-facing. A helical transmembrane segment spans residues 301-320 (ARTSLGITTVLTMTTLSTIA). Residues 321 to 328 (RKSLPKVS) are Extracellular-facing. A helical membrane pass occupies residues 329-349 (YVTAMDLFVSVCFIFVFAALM). Residues 350 to 444 (EYGTLHYFTS…RIAKIDSYSR (95 aa)) lie on the Cytoplasmic side of the membrane. The helical transmembrane segment at 445–465 (IFFPTAFALFNLVYWVGYLYL) threads the bilayer.

Belongs to the ligand-gated ion channel (TC 1.A.9) family. Gamma-aminobutyric acid receptor (TC 1.A.9.5) subfamily. GABRG1 sub-subfamily. In terms of assembly, heteropentamer, formed by a combination of alpha (GABRA1-6), beta (GABRB1-3), gamma (GABRG1-3), delta (GABRD), epsilon (GABRE), rho (GABRR1-3), pi (GABRP) and theta (GABRQ) chains, each subunit exhibiting distinct physiological and pharmacological properties. May be palmitoylated.

It localises to the postsynaptic cell membrane. The protein localises to the cell membrane. It carries out the reaction chloride(in) = chloride(out). Its function is as follows. Gamma subunit of the heteropentameric ligand-gated chloride channel gated by gamma-aminobutyric acid (GABA), a major inhibitory neurotransmitter in the brain. GABA-gated chloride channels, also named GABA(A) receptors (GABAAR), consist of five subunits arranged around a central pore and contain GABA active binding site(s) located at the alpha and beta subunit interface(s). When activated by GABA, GABAARs selectively allow the flow of chloride anions across the cell membrane down their electrochemical gradient. Chloride influx into the postsynaptic neuron following GABAAR opening decreases the neuron ability to generate a new action potential, thereby reducing nerve transmission. The polypeptide is Gamma-aminobutyric acid receptor subunit gamma-1 (Homo sapiens (Human)).